The following is a 578-amino-acid chain: Arginine--tRNA ligase (578 aa).

The 'HIGH' region motif lies at 127-137; it reads PNLAKEMHVGH.

Belongs to the class-I aminoacyl-tRNA synthetase family. As to quaternary structure, monomer.

Its subcellular location is the cytoplasm. It catalyses the reaction tRNA(Arg) + L-arginine + ATP = L-arginyl-tRNA(Arg) + AMP + diphosphate. The sequence is that of Arginine--tRNA ligase from Pseudomonas savastanoi pv. phaseolicola (strain 1448A / Race 6) (Pseudomonas syringae pv. phaseolicola (strain 1448A / Race 6)).